Consider the following 290-residue polypeptide: 33 kDa chaperonin (290 aa).

2 disulfides stabilise this stretch: C235/C237 and C268/C271.

The protein belongs to the HSP33 family. In terms of processing, under oxidizing conditions two disulfide bonds are formed involving the reactive cysteines. Under reducing conditions zinc is bound to the reactive cysteines and the protein is inactive.

It localises to the cytoplasm. Its function is as follows. Redox regulated molecular chaperone. Protects both thermally unfolding and oxidatively damaged proteins from irreversible aggregation. Plays an important role in the bacterial defense system toward oxidative stress. The sequence is that of 33 kDa chaperonin from Streptococcus pyogenes serotype M3 (strain ATCC BAA-595 / MGAS315).